Here is a 147-residue protein sequence, read N- to C-terminus: Small nuclear ribonucleoprotein-associated protein B (147 aa).

The Sm domain maps to 1 to 84 (MGTTKMVSLL…IVSLSVQGPP (84 aa)). 2 disordered regions span residues 87-106 (DPSM…PAGR) and 128-147 (APPP…FRPV).

The protein belongs to the snRNP SmB/SmN family. As to quaternary structure, belongs to the 40S cdc5-associated complex (or cwf complex), a spliceosome sub-complex reminiscent of a late-stage spliceosome composed of the U2, U5 and U6 snRNAs and at least brr2, cdc5, cwf2/prp3, cwf3/syf1, cwf4/syf3, cwf5/ecm2, spp42/cwf6, cwf7/spf27, cwf8, cwf9, cwf10, cwf11, cwf12, prp45/cwf13, cwf14, cwf15, cwf16, cwf17, cwf18, cwf19, cwf20, cwf21, cwf22, cwf23, cwf24, cwf25, cwf26, cyp7/cwf27, cwf28, cwf29/ist3, lea1, msl1, prp5/cwf1, prp10, prp12/sap130, prp17, prp22, sap61, sap62, sap114, sap145, slu7, smb1, smd1, smd3, smf1, smg1 and syf2.

It localises to the nucleus. The protein localises to the cytoplasm. In terms of biological role, plays a role in pre-mRNA splicing as a core component of the spliceosomal U1, U2, U4 and U5 small nuclear ribonucleoproteins (snRNPs), the building blocks of the spliceosome. The protein is Small nuclear ribonucleoprotein-associated protein B (smb1) of Schizosaccharomyces pombe (strain 972 / ATCC 24843) (Fission yeast).